Reading from the N-terminus, the 158-residue chain is C-type lectin TsL (158 aa).

Positions 1–23 (MGRFIFVSFGLLVVFLSLSGAKG) are cleaved as a signal peptide. A C-type lectin domain is found at 24-158 (SCCTNDSLPM…KNSFLCQCKF (135 aa)). 4 cysteine pairs are disulfide-bonded: Cys-26-Cys-37, Cys-54-Cys-154, Cys-61-Cys-156, and Cys-129-Cys-146. Residue Asn-28 is glycosylated (N-linked (GlcNAc...) (high mannose) asparagine). The Ca(2+) site is built by Gln-119, Asp-121, Glu-127, Asn-142, and Asp-143. Positions 119–121 (QPD) match the Galactose-binding motif.

This sequence belongs to the true venom lectin family. In terms of assembly, homodimer; disulfide-linked. In terms of tissue distribution, expressed by the venom gland.

It is found in the secreted. In terms of biological role, galactose-binding protein which recognizes specific carbohydrate structures and agglutinates a variety of animal cells by binding to cell-surface glycoproteins and glycolipids. May be a calcium-dependent lectin. In Trimeresurus stejnegeri (Chinese green tree viper), this protein is C-type lectin TsL.